A 288-amino-acid polypeptide reads, in one-letter code: Diaminopimelate epimerase (288 aa).

Substrate contacts are provided by Asn13, Gln46, and Asn66. Cys75 serves as the catalytic Proton donor. Residues 76-77 (GN), Asn166, Asn199, and 217-218 (ER) each bind substrate. Cys226 serves as the catalytic Proton acceptor. 227–228 (GT) serves as a coordination point for substrate.

It belongs to the diaminopimelate epimerase family. As to quaternary structure, homodimer.

Its subcellular location is the cytoplasm. It carries out the reaction (2S,6S)-2,6-diaminopimelate = meso-2,6-diaminopimelate. It participates in amino-acid biosynthesis; L-lysine biosynthesis via DAP pathway; DL-2,6-diaminopimelate from LL-2,6-diaminopimelate: step 1/1. Its function is as follows. Catalyzes the stereoinversion of LL-2,6-diaminopimelate (L,L-DAP) to meso-diaminopimelate (meso-DAP), a precursor of L-lysine and an essential component of the bacterial peptidoglycan. The polypeptide is Diaminopimelate epimerase (Cupriavidus taiwanensis (strain DSM 17343 / BCRC 17206 / CCUG 44338 / CIP 107171 / LMG 19424 / R1) (Ralstonia taiwanensis (strain LMG 19424))).